A 106-amino-acid chain; its full sequence is Malonate decarboxylase acyl carrier protein (106 aa).

Position 28 is an O-(phosphoribosyl dephospho-coenzyme A)serine (Ser28).

Belongs to the MdcC family. Post-translationally, covalently binds the prosthetic group of malonate decarboxylase.

The protein localises to the cytoplasm. Its function is as follows. Subunit of malonate decarboxylase, it is an acyl carrier protein to which acetyl and malonyl thioester residues are bound via a 2'-(5''-phosphoribosyl)-3'-dephospho-CoA prosthetic group and turn over during the catalytic mechanism. The polypeptide is Malonate decarboxylase acyl carrier protein (Stenotrophomonas maltophilia (strain R551-3)).